A 165-amino-acid chain; its full sequence is Phosphopantetheine adenylyltransferase (165 aa).

S9 is a substrate binding site. Residues 9 to 10 (SF) and H17 each bind ATP. K41, I75, and R89 together coordinate substrate. Residues 90–92 (GVR), E100, and 125–131 (YLFVRSD) contribute to the ATP site.

Belongs to the bacterial CoaD family. In terms of assembly, homohexamer. It depends on Mg(2+) as a cofactor.

It is found in the cytoplasm. It catalyses the reaction (R)-4'-phosphopantetheine + ATP + H(+) = 3'-dephospho-CoA + diphosphate. It functions in the pathway cofactor biosynthesis; coenzyme A biosynthesis; CoA from (R)-pantothenate: step 4/5. In terms of biological role, reversibly transfers an adenylyl group from ATP to 4'-phosphopantetheine, yielding dephospho-CoA (dPCoA) and pyrophosphate. The polypeptide is Phosphopantetheine adenylyltransferase (Borrelia hermsii (strain HS1 / DAH)).